A 79-amino-acid polypeptide reads, in one-letter code: ATP synthase subunit 9, mitochondrial (79 aa).

2 consecutive transmembrane segments (helical) span residues 21–41 (SGLI…ILAF) and 59–79 (FALT…ILFI).

The protein belongs to the ATPase C chain family. In terms of assembly, F-type ATPases have 2 components, CF(1) - the catalytic core - and CF(0) - the membrane proton channel. CF(1) has five subunits: alpha(3), beta(3), gamma(1), delta(1), epsilon(1). CF(0) has three main subunits: a, b and c.

The protein localises to the mitochondrion membrane. In terms of biological role, mitochondrial membrane ATP synthase (F(1)F(0) ATP synthase or Complex V) produces ATP from ADP in the presence of a proton gradient across the membrane which is generated by electron transport complexes of the respiratory chain. F-type ATPases consist of two structural domains, F(1) - containing the extramembraneous catalytic core and F(0) - containing the membrane proton channel, linked together by a central stalk and a peripheral stalk. During catalysis, ATP synthesis in the catalytic domain of F(1) is coupled via a rotary mechanism of the central stalk subunits to proton translocation. Part of the complex F(0) domain. A homomeric c-ring of probably 10 subunits is part of the complex rotary element. This Acanthamoeba castellanii (Amoeba) protein is ATP synthase subunit 9, mitochondrial (ATP9).